We begin with the raw amino-acid sequence, 150 residues long: UPF0336 protein SGR_2883 (150 aa).

The region spanning 10 to 116 (RTYPPTPAYE…STIEAVKSLA (107 aa)) is the MaoC-like domain.

This sequence belongs to the UPF0336 family.

The sequence is that of UPF0336 protein SGR_2883 from Streptomyces griseus subsp. griseus (strain JCM 4626 / CBS 651.72 / NBRC 13350 / KCC S-0626 / ISP 5235).